A 470-amino-acid polypeptide reads, in one-letter code: MSLSPVVVIGTGLAGLAAANELVNKYNIPVTILEKASSIGGNSIKASSGINGACTETQRHFHIEDSPRLFEDDTIKSAKGKGVQELMAKLANDSPLAIEWLKNEFDLKLDLLAQLGGHSVARTHRSSGKLPPGFEIVSALSNNLKKLAETKPELVKINLDSKVVDIHEKDGSISAVVYEDKNGEKHMVSANDVVFCSGGFGFSKEMLKEYAPELVNLPTTNGQQTTGDGQRLLQKLGADLIDMDQIQVHPTGFIDPNDRSSSWKFLAAESLRGLGGILLNPITGRRFVNELTTRDVVTAAIQKVCPQEDNRALLVMGEKMYTDLKNNLDFYMFKKLVQKLTLSQVVSEYNLPITVAQLCEELQTYSSFTTKADPLGRTVILNEFGSDVTPETVVFIGEVTPVVHFTMGGARINVKAQVIGKNDERLLKGLYAAGEVSGGVHGANRLGGSSLLECVVFGRTAAESIANDRK.

6–20 (VVVIGTGLAGLAAAN) provides a ligand contact to FAD. S66 carries the phosphoserine modification. Catalysis depends on residues H249 and R272.

Belongs to the FAD-dependent oxidoreductase 2 family. FRD/SDH subfamily. Requires FAD as cofactor. The N-terminus is blocked.

The protein localises to the cytoplasm. The catalysed reaction is succinate + NAD(+) = fumarate + NADH + H(+). Its function is as follows. Irreversibly catalyzes the reduction of fumarate to succinate. Together with the second isozyme of soluble fumarate reductase (OSM1), essential for anaerobic growth. Involved in maintaining redox balance. Reduction of fumarate is the main source of succinate during fermentation, and under anaerobic conditions, the formation of succinate is strictly required for the reoxidation of FADH(2). The polypeptide is Fumarate reductase 1 (FRD1) (Saccharomyces cerevisiae (strain ATCC 204508 / S288c) (Baker's yeast)).